Consider the following 2170-residue polypeptide: Brefeldin A-inhibited guanine nucleotide-exchange protein 3 (2170 aa).

Ser471 bears the Phosphoserine mark. Disordered regions lie at residues 489–547 (EHTP…MGKV) and 613–634 (AAEK…CSLA). Residues 503-524 (ISISVTTDTGQTTLEGELGQTT) show a composition bias toward polar residues. Residues 579–792 (RTRSYGSRYS…EELYHQVLDR (214 aa)) enclose the SEC7 domain. Positions 614–623 (AEKDSGRSDV) are enriched in basic and acidic residues. Ser628, Ser632, and Ser1045 each carry phosphoserine. Residues 1488–1508 (PGFGIYAVVHLLLPVMSLWLL) form a helical membrane-spanning segment. The tract at residues 1843–1872 (SSDSSQQCSSEDEDIFEETAQVSPPRGKEK) is disordered. Ser1881 is subject to Phosphoserine. Residues 1938–1955 (FQSESSTPSTGGFSGKNT) are compositionally biased toward polar residues. Disordered regions lie at residues 1938 to 1997 (FQSE…RKKE) and 2024 to 2058 (KRRQ…PLLQ). Over residues 1956-1966 (PSEDDRREHLS) the composition is skewed to basic and acidic residues. Residues Ser1975 and Ser1984 each carry the phosphoserine modification. 2 stretches are compositionally biased toward basic and acidic residues: residues 1986 to 1997 (KTEKKDPGRKKE) and 2036 to 2045 (KEVKVDKKGE). Ser2072, Ser2074, Ser2088, Ser2094, and Ser2096 each carry phosphoserine. The interval 2078 to 2097 (ELLRQEKRPRSGSTGSSLSV) is disordered. Residues 2088 to 2097 (SGSTGSSLSV) are compositionally biased toward low complexity.

As to quaternary structure, interacts with PHB2. In terms of tissue distribution, expressed in pancreatic islet (insulin granules of islet alpha and beta cells) and brain (at protein level).

It localises to the cytoplasmic vesicle. The protein localises to the secretory vesicle. Its subcellular location is the secretory vesicle membrane. Participates in the regulation of systemic glucose homeostasis, where it negatively regulates insulin granule biogenesis in pancreatic islet beta cells. Also regulates glucagon granule production in pancreatic alpha cells. Inhibits nuclear translocation of the transcriptional coregulator PHB2 and may enhance estrogen receptor alpha (ESR1) transcriptional activity in breast cancer cells. The chain is Brefeldin A-inhibited guanine nucleotide-exchange protein 3 from Mus musculus (Mouse).